The sequence spans 555 residues: Potassium-transporting ATPase potassium-binding subunit (555 aa).

10 helical membrane-spanning segments follow: residues 2 to 22 (IWVA…PTGI), 60 to 80 (QYAL…YFVF), 130 to 150 (IGIT…VMAF), 173 to 193 (VFLP…VPQT), 246 to 266 (MSNI…PFTY), 278 to 298 (ILFV…TTSE), 374 to 394 (AGFV…GLMV), 412 to 432 (LIAV…ALAL), 483 to 503 (LVMF…AASL), and 525 to 545 (GIFI…MLVL).

Belongs to the KdpA family. As to quaternary structure, the system is composed of three essential subunits: KdpA, KdpB and KdpC.

It is found in the cell membrane. Part of the high-affinity ATP-driven potassium transport (or Kdp) system, which catalyzes the hydrolysis of ATP coupled with the electrogenic transport of potassium into the cytoplasm. This subunit binds the extracellular potassium ions and delivers the ions to the membrane domain of KdpB through an intramembrane tunnel. This chain is Potassium-transporting ATPase potassium-binding subunit, found in Bacillus cereus (strain ATCC 10987 / NRS 248).